A 103-amino-acid polypeptide reads, in one-letter code: Histone H4 (103 aa).

A compositionally biased stretch (gly residues) spans 1 to 14 (MSGRGKGGKGLGKG). Positions 1 to 20 (MSGRGKGGKGLGKGGAKRHR) are disordered. Ser2 is modified (N-acetylserine). The residue at position 17 (Lys17) is an N6-acetyllysine. Residues 17-21 (KRHRK) mediate DNA binding. The residue at position 21 (Lys21) is an N6-methyllysine.

This sequence belongs to the histone H4 family. As to quaternary structure, the nucleosome is a histone octamer containing two molecules each of H2A, H2B, H3 and H4 assembled in one H3-H4 heterotetramer and two H2A-H2B heterodimers. The octamer wraps approximately 147 bp of DNA.

The protein resides in the nucleus. Its subcellular location is the chromosome. Functionally, core component of nucleosome. Nucleosomes wrap and compact DNA into chromatin, limiting DNA accessibility to the cellular machineries which require DNA as a template. Histones thereby play a central role in transcription regulation, DNA repair, DNA replication and chromosomal stability. DNA accessibility is regulated via a complex set of post-translational modifications of histones, also called histone code, and nucleosome remodeling. This Eucalyptus globulus (Tasmanian blue gum) protein is Histone H4.